The chain runs to 312 residues: Ribonuclease Z (312 aa).

H62, H64, D66, H67, H144, D215, and H273 together coordinate Zn(2+). D66 functions as the Proton acceptor in the catalytic mechanism.

This sequence belongs to the RNase Z family. Homodimer. Requires Zn(2+) as cofactor.

The enzyme catalyses Endonucleolytic cleavage of RNA, removing extra 3' nucleotides from tRNA precursor, generating 3' termini of tRNAs. A 3'-hydroxy group is left at the tRNA terminus and a 5'-phosphoryl group is left at the trailer molecule.. Functionally, zinc phosphodiesterase, which displays some tRNA 3'-processing endonuclease activity. Probably involved in tRNA maturation, by removing a 3'-trailer from precursor tRNA. This Prochlorococcus marinus subsp. pastoris (strain CCMP1986 / NIES-2087 / MED4) protein is Ribonuclease Z.